Here is a 690-residue protein sequence, read N- to C-terminus: Polyphosphate kinase (690 aa).

An ATP-binding site is contributed by asparagine 45. Arginine 375 and arginine 405 together coordinate Mg(2+). The active-site Phosphohistidine intermediate is histidine 435. Tyrosine 468, arginine 564, and histidine 592 together coordinate ATP.

This sequence belongs to the polyphosphate kinase 1 (PPK1) family. The cofactor is Mg(2+). An intermediate of this reaction is the autophosphorylated ppk in which a phosphate is covalently linked to a histidine residue through a N-P bond.

It catalyses the reaction [phosphate](n) + ATP = [phosphate](n+1) + ADP. Functionally, catalyzes the reversible transfer of the terminal phosphate of ATP to form a long-chain polyphosphate (polyP). The polypeptide is Polyphosphate kinase (Pseudomonas aeruginosa (strain ATCC 15692 / DSM 22644 / CIP 104116 / JCM 14847 / LMG 12228 / 1C / PRS 101 / PAO1)).